We begin with the raw amino-acid sequence, 290 residues long: 33 kDa chaperonin (290 aa).

2 disulfide bridges follow: cysteine 235–cysteine 237 and cysteine 268–cysteine 271.

It belongs to the HSP33 family. Post-translationally, under oxidizing conditions two disulfide bonds are formed involving the reactive cysteines. Under reducing conditions zinc is bound to the reactive cysteines and the protein is inactive.

Its subcellular location is the cytoplasm. Its function is as follows. Redox regulated molecular chaperone. Protects both thermally unfolding and oxidatively damaged proteins from irreversible aggregation. Plays an important role in the bacterial defense system toward oxidative stress. The protein is 33 kDa chaperonin of Streptococcus pyogenes serotype M1.